We begin with the raw amino-acid sequence, 150 residues long: uncharacterized protein (150 aa).

Positions 3–145 (VAILSGSVYG…DAEPWLAEFA (143 aa)) constitute a Flavodoxin-like domain.

It belongs to the flavodoxin family. MioC subfamily. FMN serves as cofactor.

Functionally, probable electron transporter. This is an uncharacterized protein from Pseudomonas aeruginosa (strain ATCC 15692 / DSM 22644 / CIP 104116 / JCM 14847 / LMG 12228 / 1C / PRS 101 / PAO1).